The primary structure comprises 513 residues: MITSPLLAYVAILFFCVLKASSLDTFIAAVYEHAAILPDAPLTPVSHEEALMLMNRNLDLLEGAVTSAAKQGAHIIVTPEDGVYGFFFSRESIYSYLEDIPDPHVNWIPCTNPSRFGHTPVQKRLSCLARDNSIYIVANIGDKKPCNASDPDCPHDGRYQYNTDVVFDSEGRLVARYHKQNLFLGEDQFDAPKEPEIVTFDTTFGRFGIFTCFGILFHDPAVTLVKDFQVDTILFPTAWMNVLPHLTAIEFHSAWAMGMRVNFLAANIHFPLRKMTGSGIYAPDSPRAFHYDMKTKEGKLLLSQLDSHPHRPAVNWTSYASGLPTPLVGNQEFKSTVFFDEFTFLELKGVAGNYTVCQKDLCCQLSYRMLEKREDEVYALGAFDGLHTVEGSYYLQICTLLKCKTMDLHSCGDSVETASTRFEMFSLSGTFGTQYVFPEVLLSDIQLAPGEFQVSSDGRLFSLKPPSGPVLTVTLFGRLYERDSASGASADLVAQGLRVMLGVIITIMYSLSW.

The N-terminal stretch at 1–22 is a signal peptide; that stretch reads MITSPLLAYVAILFFCVLKASS. A CN hydrolase domain is found at 40 to 307; that stretch reads APLTPVSHEE…GKLLLSQLDS (268 aa). Glu80 serves as the catalytic Proton acceptor. A glycan (N-linked (GlcNAc...) asparagine) is linked at Asn147. Residue Lys179 is the Proton donor of the active site. The active-site Nucleophile is the Cys212. N-linked (GlcNAc...) asparagine glycans are attached at residues Asn315 and Asn353. Residue Gly487 is the site of GPI-anchor amidated glycine attachment. Positions 488–513 are cleaved as a propeptide — removed in mature form; the sequence is ASADLVAQGLRVMLGVIITIMYSLSW.

Belongs to the carbon-nitrogen hydrolase superfamily. BTD/VNN family. In terms of assembly, monomer. As to expression, detected in kidney (at protein level).

It is found in the cell membrane. It carries out the reaction (R)-pantetheine + H2O = cysteamine + (R)-pantothenate. Its function is as follows. Amidohydrolase that hydrolyzes specifically one of the carboamide linkages in D-pantetheine thus recycling pantothenic acid (vitamin B5) and releasing cysteamine. This is Pantetheinase (VNN1) from Sus scrofa (Pig).